Consider the following 350-residue polypeptide: Anthranilate phosphoribosyltransferase (350 aa).

Residues Gly-82, 85–86, Ser-90, 92–95, 110–118, and Gly-122 contribute to the 5-phospho-alpha-D-ribose 1-diphosphate site; these read GD, NVST, and KHGNRAVTG. Gly-82 is an anthranilate binding site. Position 94 (Ser-94) interacts with Mg(2+). Asn-113 contributes to the anthranilate binding site. Arg-168 serves as a coordination point for anthranilate. 2 residues coordinate Mg(2+): Asp-232 and Glu-233.

Belongs to the anthranilate phosphoribosyltransferase family. As to quaternary structure, homodimer. Mg(2+) is required as a cofactor.

It catalyses the reaction N-(5-phospho-beta-D-ribosyl)anthranilate + diphosphate = 5-phospho-alpha-D-ribose 1-diphosphate + anthranilate. It functions in the pathway amino-acid biosynthesis; L-tryptophan biosynthesis; L-tryptophan from chorismate: step 2/5. Catalyzes the transfer of the phosphoribosyl group of 5-phosphorylribose-1-pyrophosphate (PRPP) to anthranilate to yield N-(5'-phosphoribosyl)-anthranilate (PRA). The chain is Anthranilate phosphoribosyltransferase from Methanothermobacter marburgensis (strain ATCC BAA-927 / DSM 2133 / JCM 14651 / NBRC 100331 / OCM 82 / Marburg) (Methanobacterium thermoautotrophicum).